The primary structure comprises 303 residues: Protease HtpX (303 aa).

The next 2 helical transmembrane spans lie at 4-24 (IGLFLLTNLAVLVVFSIVFGI) and 42-62 (IASLAVMCAVYGMIGSMISLF). Position 149 (His149) interacts with Zn(2+). Glu150 is an active-site residue. Residue His153 coordinates Zn(2+). A run of 2 helical transmembrane segments spans residues 157 to 177 (GDMVTLALIQGVVNAFVMFFA) and 200 to 220 (FVTSIVMDILLGFLASAIVMW). Position 226 (Glu226) interacts with Zn(2+).

The protein belongs to the peptidase M48B family. The cofactor is Zn(2+).

The protein localises to the cell inner membrane. In Psychrobacter sp. (strain PRwf-1), this protein is Protease HtpX.